Reading from the N-terminus, the 210-residue chain is Fimbriae Z protein (210 aa).

Residues 5 to 121 (SVIIMDEHPI…DIYNAVKMIL (117 aa)) form the Response regulatory domain. Aspartate 56 is modified (4-aspartylphosphate). Residues 143 to 208 (GGHHDMPLSN…ELIDYAKSHE (66 aa)) form the HTH luxR-type domain. A DNA-binding region (H-T-H motif) is located at residues 167-186 (NKEIAEQLLLSNKTISAHKA).

It localises to the cytoplasm. The sequence is that of Fimbriae Z protein (fimZ) from Salmonella typhimurium (strain LT2 / SGSC1412 / ATCC 700720).